Consider the following 455-residue polypeptide: UDP-N-acetylmuramoylalanine--D-glutamate ligase (455 aa).

112-118 (GTNGKTT) lines the ATP pocket.

This sequence belongs to the MurCDEF family.

The protein resides in the cytoplasm. The enzyme catalyses UDP-N-acetyl-alpha-D-muramoyl-L-alanine + D-glutamate + ATP = UDP-N-acetyl-alpha-D-muramoyl-L-alanyl-D-glutamate + ADP + phosphate + H(+). Its pathway is cell wall biogenesis; peptidoglycan biosynthesis. In terms of biological role, cell wall formation. Catalyzes the addition of glutamate to the nucleotide precursor UDP-N-acetylmuramoyl-L-alanine (UMA). The chain is UDP-N-acetylmuramoylalanine--D-glutamate ligase from Trichormus variabilis (strain ATCC 29413 / PCC 7937) (Anabaena variabilis).